The primary structure comprises 152 residues: Protein SprT-like (152 aa).

A SprT-like domain is found at 7-147 (QRLVEEVSLQ…CGKCKGKLKP (141 aa)). Residue H67 coordinates Zn(2+). E68 is an active-site residue. H71 contacts Zn(2+).

Belongs to the SprT family. Zn(2+) serves as cofactor.

It localises to the cytoplasm. In Bacillus cereus (strain ATCC 14579 / DSM 31 / CCUG 7414 / JCM 2152 / NBRC 15305 / NCIMB 9373 / NCTC 2599 / NRRL B-3711), this protein is Protein SprT-like.